The chain runs to 273 residues: Large ribosomal subunit protein uL2cz/uL2cy (273 aa).

2 disordered regions span residues 1-25 (MAKHLYKTPIPSTRKGTLDRQVKSN) and 225-253 (PVDHPHGGGEGKAPIGRKKPTTPWGYPAL).

It belongs to the universal ribosomal protein uL2 family. As to quaternary structure, part of the 50S ribosomal subunit.

It is found in the plastid. It localises to the chloroplast. This Triticum aestivum (Wheat) protein is Large ribosomal subunit protein uL2cz/uL2cy (rpl2-A).